Here is an 85-residue protein sequence, read N- to C-terminus: Probable oxaloacetate decarboxylase gamma chain (85 aa).

The helical transmembrane segment at 11 to 33 (AAALMVTGMGVVFIFLTILIFLV) threads the bilayer.

It belongs to the OadG family. Heterotrimer of an alpha, a beta and a gamma subunit. Requires Na(+) as cofactor.

It is found in the cell membrane. The enzyme catalyses oxaloacetate + 2 Na(+)(in) + H(+) = pyruvate + 2 Na(+)(out) + CO2. Its function is as follows. Catalyzes the decarboxylation of oxaloacetate coupled to Na(+) translocation. This Vibrio vulnificus (strain CMCP6) protein is Probable oxaloacetate decarboxylase gamma chain.